We begin with the raw amino-acid sequence, 157 residues long: SsrA-binding protein (157 aa).

The interval 126–157 is disordered; it reads GLGKGKQAHDKREAVKERDWQRDRARLMRDRG. Residues 132-157 are compositionally biased toward basic and acidic residues; it reads QAHDKREAVKERDWQRDRARLMRDRG.

Belongs to the SmpB family.

It is found in the cytoplasm. In terms of biological role, required for rescue of stalled ribosomes mediated by trans-translation. Binds to transfer-messenger RNA (tmRNA), required for stable association of tmRNA with ribosomes. tmRNA and SmpB together mimic tRNA shape, replacing the anticodon stem-loop with SmpB. tmRNA is encoded by the ssrA gene; the 2 termini fold to resemble tRNA(Ala) and it encodes a 'tag peptide', a short internal open reading frame. During trans-translation Ala-aminoacylated tmRNA acts like a tRNA, entering the A-site of stalled ribosomes, displacing the stalled mRNA. The ribosome then switches to translate the ORF on the tmRNA; the nascent peptide is terminated with the 'tag peptide' encoded by the tmRNA and targeted for degradation. The ribosome is freed to recommence translation, which seems to be the essential function of trans-translation. This chain is SsrA-binding protein, found in Methylobacterium radiotolerans (strain ATCC 27329 / DSM 1819 / JCM 2831 / NBRC 15690 / NCIMB 10815 / 0-1).